The sequence spans 887 residues: Kinesin-like protein KIF20A (887 aa).

The residue at position 2 (serine 2) is an N-acetylserine. Serine 7, serine 14, and serine 21 each carry phosphoserine. The 444-residue stretch at 63–506 folds into the Kinesin motor domain; it reads KVKVYLRIRP…AKFSALASQL (444 aa). 159 to 166 provides a ligand contact to ATP; it reads GVTNSGKT. Serine 527 bears the Phosphoserine; by PLK1 mark. The interval 527-553 is disordered; it reads SPQVGPGLEKEDKADSDLEDSPEDEAD. Residues 543–553 show a composition bias toward acidic residues; sequence DLEDSPEDEAD. The stretch at 559 to 804 forms a coiled coil; it reads KEELLQVVEA…VLVKLDLQKK (246 aa). Serine 683 and serine 823 each carry phosphoserine. The globular stretch occupies residues 805–887; it reads AACIAEQYHT…LLKSPFGKKY (83 aa). The disordered stretch occupies residues 826-875; the sequence is KRLGANQENQQPNHQPPGKKPFLRNLLPRTPTCQSSTDSSPYARILRSRH. A Phosphothreonine modification is found at threonine 855. The segment covering 856–865 has biased composition (polar residues); that stretch reads PTCQSSTDSS. 3 positions are modified to phosphoserine: serine 865, serine 876, and serine 881.

This sequence belongs to the TRAFAC class myosin-kinesin ATPase superfamily. Kinesin family. Post-translationally, phosphorylated by PLK1 at Ser-527 during mitosis, creating a docking site for PLK1 and recruiting PLK1 at central spindle. Ubiquitously expressed, with highest levels in spleen and testis.

Its subcellular location is the golgi apparatus. It is found in the cytoplasm. The protein localises to the cytoskeleton. It localises to the spindle. Mitotic kinesin required for chromosome passenger complex (CPC)-mediated cytokinesis. Following phosphorylation by PLK1, involved in recruitment of PLK1 to the central spindle. Interacts with guanosine triphosphate (GTP)-bound forms of RAB6A and RAB6B. May act as a motor required for the retrograde RAB6 regulated transport of Golgi membranes and associated vesicles along microtubules. Has a microtubule plus end-directed motility. In Mus musculus (Mouse), this protein is Kinesin-like protein KIF20A (Kif20a).